The following is a 240-amino-acid chain: Thyroid transcription factor 1-associated protein 26 (240 aa).

The tract at residues 104–181 (LRKQQRKAGL…QEEYERVQAK (78 aa)) is disordered. Residues 131-149 (TEQTSSEEPPGGHQPQPEE) are compositionally biased toward low complexity. Residues 171–181 (AQEEYERVQAK) show a composition bias toward basic and acidic residues.

The protein belongs to the TAP26 family. Interacts with NKX2-1.

Its subcellular location is the nucleus. Component of the transcription complexes of the pulmonary surfactant-associated protein-B (SFTPB) and -C (SFTPC). Enhances homeobox protein Nkx-2.1-activated SFTPB and SFTPC promoter activities. In Mus musculus (Mouse), this protein is Thyroid transcription factor 1-associated protein 26 (Ccdc59).